The following is a 102-amino-acid chain: Parathymosin (102 aa).

Positions 1 to 102 (MSEKSVEAAA…RQKTENGASA (102 aa)) are disordered. An N-acetylserine modification is found at Ser-2. Ser-2 carries the post-translational modification Phosphoserine. Lys-4 is subject to N6-acetyllysine. Ser-5 and Ser-13 each carry phosphoserine. Over residues 13–37 (SAKDLKEKKEKVEEKAGRKERKKEV) the composition is skewed to basic and acidic residues. Lys-15 carries the post-translational modification N6-acetyllysine. A compositionally biased stretch (acidic residues) spans 38–76 (VEEEENGAEEEEEETAEDGEEEDDGDEEDEEEEEEEDEG). The residue at position 52 (Thr-52) is a Phosphothreonine. At Lys-92 the chain carries N6-acetyllysine.

The protein belongs to the pro/parathymosin family.

In terms of biological role, parathymosin may mediate immune function by blocking the effect of prothymosin alpha which confers resistance to certain opportunistic infections. This Bos taurus (Bovine) protein is Parathymosin (PTMS).